Here is a 141-residue protein sequence, read N- to C-terminus: Nucleoside diphosphate kinase (141 aa).

The ATP site is built by Lys-11, Phe-59, Arg-87, Thr-93, Arg-104, and Asn-114. Catalysis depends on His-117, which acts as the Pros-phosphohistidine intermediate.

Belongs to the NDK family. In terms of assembly, homotetramer. The cofactor is Mg(2+).

Its subcellular location is the cytoplasm. It catalyses the reaction a 2'-deoxyribonucleoside 5'-diphosphate + ATP = a 2'-deoxyribonucleoside 5'-triphosphate + ADP. The enzyme catalyses a ribonucleoside 5'-diphosphate + ATP = a ribonucleoside 5'-triphosphate + ADP. In terms of biological role, major role in the synthesis of nucleoside triphosphates other than ATP. The ATP gamma phosphate is transferred to the NDP beta phosphate via a ping-pong mechanism, using a phosphorylated active-site intermediate. The polypeptide is Nucleoside diphosphate kinase (Legionella pneumophila (strain Paris)).